The primary structure comprises 189 residues: dCTP deaminase (189 aa).

DCTP is bound by residues 112–117 (KSTYAR), 136–138 (TLE), Gln-157, Tyr-171, and Gln-181. Residue Glu-138 is the Proton donor/acceptor of the active site.

The protein belongs to the dCTP deaminase family. As to quaternary structure, homotrimer.

It carries out the reaction dCTP + H2O + H(+) = dUTP + NH4(+). Its pathway is pyrimidine metabolism; dUMP biosynthesis; dUMP from dCTP (dUTP route): step 1/2. Catalyzes the deamination of dCTP to dUTP. This chain is dCTP deaminase, found in Methylacidiphilum infernorum (isolate V4) (Methylokorus infernorum (strain V4)).